The chain runs to 552 residues: Putative transport protein Spro_0050 (552 aa).

A run of 6 helical transmembrane segments spans residues 4–24 (IALTVSMLALVAVLGLWMGNW), 26–46 (IYGVGLGIGGVLFGGIIVGHF), 65–85 (FGLILFVYTIGIQVGPGFFSS), 96–116 (FAILLVLVGGLVAAVVHKLFA), 117–137 (VPLPIILGVFSGAVTNTPALG), and 158–178 (MGYAMAYPFGICGILLVMWLI). 2 consecutive RCK C-terminal domains span residues 192-276 (AFAS…VIGE) and 279-361 (DVSL…IVGN). The next 6 helical transmembrane spans lie at 371-391 (MLPVFIGIGLGVLLGSIPLFI), 393-413 (GFPAALRLGLAGGPLVAALIL), 439-459 (IVLFLAVVGLKSGGNFVDTLI), 464-484 (LAWIGYGALITAIPLFSVGVL), 493-513 (YLTLSGMLAGSMTDPPALAFA), and 530-550 (VYPLAMFLRIMSPQLLAVLFW).

The protein belongs to the AAE transporter (TC 2.A.81) family. YidE subfamily.

The protein resides in the cell membrane. The sequence is that of Putative transport protein Spro_0050 from Serratia proteamaculans (strain 568).